We begin with the raw amino-acid sequence, 237 residues long: MTNELVYEGKAKQLFKTEEAGVLRVAYKDDATALNGVRKESFAGKGELNNQITALIFSYLEEAGIRSHFIRAISETEQLVKEVSIIPLEVVVRNVIAGSLAKRLGKEEGEEIPSAIVEFYYKEDALDDPFINDDHVLYLEIATTNEMEVIRKAARSINEVLQVLFNQMNITLIDFKLEFGRDADGNILLADEISPDTCRLWDKETKQKLDKDVFRRNIGNLTDVYTEVLNRLKQVQN.

The protein belongs to the SAICAR synthetase family.

The enzyme catalyses 5-amino-1-(5-phospho-D-ribosyl)imidazole-4-carboxylate + L-aspartate + ATP = (2S)-2-[5-amino-1-(5-phospho-beta-D-ribosyl)imidazole-4-carboxamido]succinate + ADP + phosphate + 2 H(+). It participates in purine metabolism; IMP biosynthesis via de novo pathway; 5-amino-1-(5-phospho-D-ribosyl)imidazole-4-carboxamide from 5-amino-1-(5-phospho-D-ribosyl)imidazole-4-carboxylate: step 1/2. The sequence is that of Phosphoribosylaminoimidazole-succinocarboxamide synthase from Listeria welshimeri serovar 6b (strain ATCC 35897 / DSM 20650 / CCUG 15529 / CIP 8149 / NCTC 11857 / SLCC 5334 / V8).